A 200-amino-acid chain; its full sequence is Charged multivesicular body protein 6-A (200 aa).

A lipid anchor (N-myristoyl glycine) is attached at glycine 2. Positions 9–102 (RRSRVTEQDK…FAQIEMKVIE (94 aa)) form a coiled coil. The disordered stretch occupies residues 166–200 (EDLELPEAPSEPLPDTIPEKQAVKNKPKPQMIAAS). The Type-2 MIT-interacting motif motif lies at 168-179 (LELPEAPSEPLP).

Belongs to the SNF7 family. Probable core component of the endosomal sorting required for transport complex III (ESCRT-III). ESCRT-III components are thought to multimerize to form a flat lattice on the perimeter membrane of the endosome.

Its subcellular location is the endomembrane system. The protein localises to the late endosome membrane. In terms of biological role, probable core component of the endosomal sorting required for transport complex III (ESCRT-III) which is involved in multivesicular bodies (MVBs) formation and sorting of endosomal cargo proteins into MVBs. MVBs contain intraluminal vesicles (ILVs) that are generated by invagination and scission from the limiting membrane of the endosome and mostly are delivered to lysosomes enabling degradation of membrane proteins, such as stimulated growth factor receptors, lysosomal enzymes and lipids. In the ESCRT-III complex, it probably serves as an acceptor for the ESCRT-II complex on endosomal membranes. This is Charged multivesicular body protein 6-A (chmp6-a) from Xenopus laevis (African clawed frog).